The primary structure comprises 499 residues: Probable cytosol aminopeptidase (499 aa).

Mn(2+) contacts are provided by lysine 269 and aspartate 274. The active site involves lysine 281. Mn(2+) is bound by residues aspartate 292, aspartate 351, and glutamate 353. The active site involves arginine 355.

The protein belongs to the peptidase M17 family. Requires Mn(2+) as cofactor.

The protein localises to the cytoplasm. It carries out the reaction Release of an N-terminal amino acid, Xaa-|-Yaa-, in which Xaa is preferably Leu, but may be other amino acids including Pro although not Arg or Lys, and Yaa may be Pro. Amino acid amides and methyl esters are also readily hydrolyzed, but rates on arylamides are exceedingly low.. It catalyses the reaction Release of an N-terminal amino acid, preferentially leucine, but not glutamic or aspartic acids.. Functionally, presumably involved in the processing and regular turnover of intracellular proteins. Catalyzes the removal of unsubstituted N-terminal amino acids from various peptides. The chain is Probable cytosol aminopeptidase from Haemophilus ducreyi (strain 35000HP / ATCC 700724).